We begin with the raw amino-acid sequence, 217 residues long: C-type lectin domain family 2 member I (217 aa).

Over 1 to 53 the chain is Cytoplasmic; it reads MPDCLETGEKLFVHNMNAQCVQKPEEGNGPLGTGGKIVQGKCFRIISTVSPVK. A helical; Signal-anchor for type II membrane protein membrane pass occupies residues 54–74; that stretch reads LYCCYGVIMVLTVAVIALSVA. The Extracellular segment spans residues 75 to 217; it reads LSTKKTEQII…YNLHCQTPPV (143 aa). Cysteine 92 and cysteine 103 are disulfide-bonded. In terms of domain architecture, C-type lectin spans 99 to 203; that stretch reads VGNKCFYFSG…SYINRMWICS (105 aa). Residue asparagine 112 is glycosylated (N-linked (GlcNAc...) asparagine). Cysteines 120 and 202 form a disulfide.

Detected in osteoblasts, growth plate chondrocytes and skeletal muscle overlying the bone (at protein level). Detected in spleen, B-cells, dendritic cells, thymus, and in IL2-activated natural killer cells.

It is found in the cell membrane. Inhibits osteoclast formation. Receptor for KLRB1F. Enhances T-cell activation. Plays a role in splenocyte activation, T-cell responses and IL-2 production. In Mus musculus (Mouse), this protein is C-type lectin domain family 2 member I (Clec2i).